The following is a 401-amino-acid chain: Argininosuccinate synthase (401 aa).

Residues 10–18 and A38 contribute to the ATP site; that span reads AYSGGVDTS. Y89 contacts L-citrulline. G119 is a binding site for ATP. Residues T121, N125, and D126 each contribute to the L-aspartate site. Position 125 (N125) interacts with L-citrulline. Residues R129, S177, S186, E262, and Y274 each contribute to the L-citrulline site.

It belongs to the argininosuccinate synthase family. Type 1 subfamily. Homotetramer.

The protein resides in the cytoplasm. It carries out the reaction L-citrulline + L-aspartate + ATP = 2-(N(omega)-L-arginino)succinate + AMP + diphosphate + H(+). It participates in amino-acid biosynthesis; L-arginine biosynthesis; L-arginine from L-ornithine and carbamoyl phosphate: step 2/3. The polypeptide is Argininosuccinate synthase (Microcystis aeruginosa (strain NIES-843 / IAM M-2473)).